A 455-amino-acid chain; its full sequence is ATP-dependent protease ATPase subunit HslU (455 aa).

ATP is bound by residues valine 23, 65 to 70, aspartate 266, glutamate 333, and arginine 405; that span reads GVGKTE.

It belongs to the ClpX chaperone family. HslU subfamily. In terms of assembly, a double ring-shaped homohexamer of HslV is capped on each side by a ring-shaped HslU homohexamer. The assembly of the HslU/HslV complex is dependent on binding of ATP.

The protein resides in the cytoplasm. In terms of biological role, ATPase subunit of a proteasome-like degradation complex; this subunit has chaperone activity. The binding of ATP and its subsequent hydrolysis by HslU are essential for unfolding of protein substrates subsequently hydrolyzed by HslV. HslU recognizes the N-terminal part of its protein substrates and unfolds these before they are guided to HslV for hydrolysis. The polypeptide is ATP-dependent protease ATPase subunit HslU (Xanthomonas axonopodis pv. citri (strain 306)).